The primary structure comprises 410 residues: Trifunctional NAD biosynthesis/regulator protein NadR (410 aa).

An HTH cro/C1-type domain is found at 7-62; sequence LKTAIKQQGCTLQQVADASGMTKGYLSQLLNAKIKSPSAQKLEALHRFLGLEFPRQ. A DNA-binding region (H-T-H motif) is located at residues 18–37; that stretch reads LQQVADASGMTKGYLSQLLN. The interval 63–229 is nicotinamide mononucleotide adenylyltransferase; the sequence is KKTIGVVFGK…EYIPTEVKPF (167 aa). NAD(+) is bound by residues 70-73, His-77, Arg-104, 144-157, 177-179, 204-206, 259-261, and 294-297; these read FGKF, EEGMEPYPHGWDVW, TSE, MSI, SAW, and YIDF. The interval 230-410 is ribosylnicotinamide kinase; the sequence is FVRTVAILGG…LVREMMGEQR (181 aa).

The protein in the central section; belongs to the bacterial NMN adenylyltransferase family. It in the C-terminal section; belongs to the bacterial RNK family. Homotetramer.

It is found in the cell membrane. The protein localises to the cytoplasm. It catalyses the reaction beta-nicotinamide D-ribonucleotide + ATP + H(+) = diphosphate + NAD(+). The catalysed reaction is beta-nicotinamide D-riboside + ATP = beta-nicotinamide D-ribonucleotide + ADP + H(+). It participates in cofactor biosynthesis; NAD(+) biosynthesis [regulation]. Its pathway is cofactor biosynthesis; NAD(+) biosynthesis; NAD(+) from nicotinamide D-ribonucleotide: step 1/1. With respect to regulation, feed-back regulated by NAD. A high level of NAD causes NadR to lose enzymatic activity and repress several NAD synthetic genes; conversely, a low NAD level activates the assimilatory enzymatic activities and leads to derepression of biosynthetic genes. In terms of biological role, this enzyme has three activities: DNA binding, nicotinamide mononucleotide (NMN) adenylyltransferase and ribosylnicotinamide (RN) kinase. The DNA-binding domain binds to the nadB operator sequence in an NAD- and ATP-dependent manner. As NAD levels increase within the cell, the affinity of NadR for the nadB operator regions of nadA, nadB, and pncB increases, repressing the transcription of these genes. The RN kinase activity catalyzes the phosphorylation of RN to form nicotinamide ribonucleotide. The NMN adenylyltransferase activity catalyzes the transfer of the AMP moiety of ATP to nicotinamide ribonucleotide to form NAD(+). The NMN adenylyltransferase domain also functions as the NAD and ATP sensor. The chain is Trifunctional NAD biosynthesis/regulator protein NadR (nadR) from Escherichia coli (strain K12).